A 75-amino-acid polypeptide reads, in one-letter code: Mitochondrial import receptor subunit TOM7-1 (75 aa).

Methionine 1 is modified (N-acetylmethionine). The tract at residues methionine 1 to lysine 28 is disordered. Residues methionine 1 to valine 46 lie on the Cytoplasmic side of the membrane. Residues threonine 47–proline 64 traverse the membrane as a helical segment. Over lysine 65 to valine 75 the chain is Mitochondrial intermembrane.

Belongs to the Tom7 family. Forms part of the preprotein translocase complex of the outer mitochondrial membrane (TOM complex) which consists of at least 6 different proteins (TOM5, TOM6, TOM7, TOM20, TOM22/TOM9 and TOM40). As to expression, expressed in roots, flowers, young cotyledons and leaves.

Its subcellular location is the mitochondrion outer membrane. Functionally, seems to act as a modulator of the dynamics of the mitochondrial protein transport machinery. Seems to promote the dissociation of subunits of the outer membrane translocase. The chain is Mitochondrial import receptor subunit TOM7-1 (TOM7-1) from Arabidopsis thaliana (Mouse-ear cress).